The following is a 458-amino-acid chain: ATP synthase subunit beta (458 aa).

An ATP-binding site is contributed by glycine 148 to threonine 155.

This sequence belongs to the ATPase alpha/beta chains family. As to quaternary structure, F-type ATPases have 2 components, CF(1) - the catalytic core - and CF(0) - the membrane proton channel. CF(1) has five subunits: alpha(3), beta(3), gamma(1), delta(1), epsilon(1). CF(0) has three main subunits: a(1), b(2) and c(9-12). The alpha and beta chains form an alternating ring which encloses part of the gamma chain. CF(1) is attached to CF(0) by a central stalk formed by the gamma and epsilon chains, while a peripheral stalk is formed by the delta and b chains.

The protein localises to the cell inner membrane. The enzyme catalyses ATP + H2O + 4 H(+)(in) = ADP + phosphate + 5 H(+)(out). Produces ATP from ADP in the presence of a proton gradient across the membrane. The catalytic sites are hosted primarily by the beta subunits. This chain is ATP synthase subunit beta, found in Shewanella woodyi (strain ATCC 51908 / MS32).